The following is a 264-amino-acid chain: MKSYLALLSHVLNQGIDRTDRTGVGTRSIFGYQMRFDLQAGFPLLTTKKLHLRSIIYELLWFLKGDTNIAWLKEHGVSIWDEWADKQGNLGPVYGYQWRSWPAPDGRHIDQIDNLLRMIKEKPDSRRLIVSAWNPALIEEMALPPCHCLFQFYIDEGKLSCQLYQRSADIFLGVPFNIASYALLTMMIAQVSGLKVGDFIHTFGDAHLYSNHFEQAQYQLSRIPNALPCMRINPAVTDLFSFKFEDFELLNYEAHPHIKAPVAI.

A dUMP-binding site is contributed by Arg21. Residue His51 participates in (6R)-5,10-methylene-5,6,7,8-tetrahydrofolate binding. 126–127 (RR) contacts dUMP. Catalysis depends on Cys146, which acts as the Nucleophile. DUMP is bound by residues 166–169 (RSAD), Asn177, and 207–209 (HLY). Residue Asp169 participates in (6R)-5,10-methylene-5,6,7,8-tetrahydrofolate binding. Position 263 (Ala263) interacts with (6R)-5,10-methylene-5,6,7,8-tetrahydrofolate.

The protein belongs to the thymidylate synthase family. Bacterial-type ThyA subfamily. In terms of assembly, homodimer.

It localises to the cytoplasm. The enzyme catalyses dUMP + (6R)-5,10-methylene-5,6,7,8-tetrahydrofolate = 7,8-dihydrofolate + dTMP. It functions in the pathway pyrimidine metabolism; dTTP biosynthesis. Catalyzes the reductive methylation of 2'-deoxyuridine-5'-monophosphate (dUMP) to 2'-deoxythymidine-5'-monophosphate (dTMP) while utilizing 5,10-methylenetetrahydrofolate (mTHF) as the methyl donor and reductant in the reaction, yielding dihydrofolate (DHF) as a by-product. This enzymatic reaction provides an intracellular de novo source of dTMP, an essential precursor for DNA biosynthesis. This chain is Thymidylate synthase, found in Bartonella tribocorum (strain CIP 105476 / IBS 506).